Here is a 392-residue protein sequence, read N- to C-terminus: Putative nickel insertion protein (392 aa).

Belongs to the LarC family.

This is Putative nickel insertion protein from Methanothrix thermoacetophila (strain DSM 6194 / JCM 14653 / NBRC 101360 / PT) (Methanosaeta thermophila).